Reading from the N-terminus, the 465-residue chain is Argininosuccinate lyase (465 aa).

The protein belongs to the lyase 1 family. Argininosuccinate lyase subfamily.

It is found in the cytoplasm. It carries out the reaction 2-(N(omega)-L-arginino)succinate = fumarate + L-arginine. Its pathway is amino-acid biosynthesis; L-arginine biosynthesis; L-arginine from L-ornithine and carbamoyl phosphate: step 3/3. This Nitrobacter winogradskyi (strain ATCC 25391 / DSM 10237 / CIP 104748 / NCIMB 11846 / Nb-255) protein is Argininosuccinate lyase.